Reading from the N-terminus, the 438-residue chain is 3-phosphoshikimate 1-carboxyvinyltransferase (438 aa).

Lysine 25, serine 26, and arginine 30 together coordinate 3-phosphoshikimate. Lysine 25 contributes to the phosphoenolpyruvate binding site. Residues glycine 99 and arginine 128 each contribute to the phosphoenolpyruvate site. Positions 173, 175, 325, and 352 each coordinate 3-phosphoshikimate. Glutamine 175 is a phosphoenolpyruvate binding site. The active-site Proton acceptor is aspartate 325. The phosphoenolpyruvate site is built by arginine 356 and arginine 398.

The protein belongs to the EPSP synthase family. As to quaternary structure, monomer.

It is found in the cytoplasm. It catalyses the reaction 3-phosphoshikimate + phosphoenolpyruvate = 5-O-(1-carboxyvinyl)-3-phosphoshikimate + phosphate. It functions in the pathway metabolic intermediate biosynthesis; chorismate biosynthesis; chorismate from D-erythrose 4-phosphate and phosphoenolpyruvate: step 6/7. In terms of biological role, catalyzes the transfer of the enolpyruvyl moiety of phosphoenolpyruvate (PEP) to the 5-hydroxyl of shikimate-3-phosphate (S3P) to produce enolpyruvyl shikimate-3-phosphate and inorganic phosphate. This chain is 3-phosphoshikimate 1-carboxyvinyltransferase, found in Prochlorococcus marinus (strain MIT 9515).